Here is a 377-residue protein sequence, read N- to C-terminus: Transcription factor ast-1 (377 aa).

The segment at 72–143 (PNRMLYNDNT…SNGSSSSTES (72 aa)) is disordered. Composition is skewed to low complexity over residues 96–109 (STSASSSGNSTSSK) and 118–142 (TESSNSSGNGAAATSGSNGSSSSTE). The ETS DNA-binding region spans 214–294 (TQLWQFLLEL…HGKRYAYKFD (81 aa)).

The protein belongs to the ETS family. As to expression, expressed in the A-neurons in the male-specific genital sensilla (simple sense organs) known as rays.

The protein localises to the nucleus. It is found in the cell projection. It localises to the neuron projection. Transcription factor. Probably binds to DNA sequences containing the consensus motif 5'-CGGA[AT][AG]-3'. Positively modulates expression of dopamine pathway genes, acting as a terminal selector for differentiation of dopaminergic neurons; may act in concert with homeobox proteins ceh-40, ceh-43 and ceh-20. Required for axon navigation in some interneurons, perhaps acting in the same pathways as basement membrane protein nid-1 and unc-6/netrin. Plays a role in the differentiation of the ventral cord pioneer neuron AVG. Required for morphogenesis of the pharynx. This is Transcription factor ast-1 from Caenorhabditis elegans.